The sequence spans 108 residues: Universal stress protein Slr1101 (108 aa).

It belongs to the universal stress protein A family.

The sequence is that of Universal stress protein Slr1101 from Synechocystis sp. (strain ATCC 27184 / PCC 6803 / Kazusa).